Consider the following 350-residue polypeptide: Putative deoxyribonuclease-2 (350 aa).

This sequence belongs to the DNase II family.

The polypeptide is Putative deoxyribonuclease-2 (Burkholderia pseudomallei (strain 1710b)).